Reading from the N-terminus, the 118-residue chain is Ribosome-binding factor A (118 aa).

This sequence belongs to the RbfA family. Monomer. Binds 30S ribosomal subunits, but not 50S ribosomal subunits or 70S ribosomes.

Its subcellular location is the cytoplasm. One of several proteins that assist in the late maturation steps of the functional core of the 30S ribosomal subunit. Associates with free 30S ribosomal subunits (but not with 30S subunits that are part of 70S ribosomes or polysomes). Required for efficient processing of 16S rRNA. May interact with the 5'-terminal helix region of 16S rRNA. The protein is Ribosome-binding factor A of Bacillus cereus (strain AH820).